Here is a 91-residue protein sequence, read N- to C-terminus: Early E3B 10.4 kDa protein (91 aa).

The first 22 residues, 1–22 (MIPRNFFFTILICPFNVCATFT), serve as a signal peptide directing secretion. Residues 23 to 34 (AVATASPDCIGP) lie on the Lumenal side of the membrane. The chain crosses the membrane as a helical span at residues 35–60 (FASYALFAFVTCICVCSIVCLVINFF). Topologically, residues 61-91 (QLVDWIFVRIAYLRHHPEYRNQNVAALLRLI) are cytoplasmic.

The protein belongs to the adenoviridae E3B family.

Its subcellular location is the host endoplasmic reticulum membrane. Down-regulates the EGF receptor. The polypeptide is Early E3B 10.4 kDa protein (Human adenovirus B serotype 3 (HAdV-3)).